Consider the following 375-residue polypeptide: Protein arginine N-methyltransferase 6 (375 aa).

The segment at 1 to 36 (MSQPKRRKLESGGGGEGGEGTEEEDGGELEVAVPRP) is disordered. A compositionally biased stretch (acidic residues) spans 19–28 (EGTEEEDGGE). T21 carries the phosphothreonine modification. The residue at position 38 (R38) is an Asymmetric dimethylarginine; by autocatalysis. The SAM-dependent MTase PRMT-type domain occupies 44–374 (DQLYYQCYSD…EEKTKDFAME (331 aa)). Positions 57, 66, 90, 112, and 141 each coordinate S-adenosyl-L-methionine. Residues E155 and E164 contribute to the active site.

Belongs to the class I-like SAM-binding methyltransferase superfamily. Protein arginine N-methyltransferase family. PRMT6 subfamily. Interacts with (and methylates) HIV-1 Tat, Rev and Nucleocapsid protein p7 (NC). Interacts with EPB41L3 and NCOA1. Automethylation enhances its stability.

Its subcellular location is the nucleus. It carries out the reaction L-arginyl-[protein] + 2 S-adenosyl-L-methionine = N(omega),N(omega)-dimethyl-L-arginyl-[protein] + 2 S-adenosyl-L-homocysteine + 2 H(+). Arginine methyltransferase that can catalyze the formation of both omega-N monomethylarginine (MMA) and asymmetrical dimethylarginine (aDMA), with a strong preference for the formation of aDMA. Preferentially methylates arginyl residues present in a glycine and arginine-rich domain and displays preference for monomethylated substrates. Specifically mediates the asymmetric dimethylation of histone H3 'Arg-2' to form H3R2me2a. H3R2me2a represents a specific tag for epigenetic transcriptional repression and is mutually exclusive with methylation on histone H3 'Lys-4' (H3K4me2 and H3K4me3). Acts as a transcriptional repressor of various genes such as HOXA2, THBS1 and TP53. Repression of TP53 blocks cellular senescence. Also methylates histone H2A and H4 'Arg-3' (H2AR3me and H4R3me, respectively). Acts as a regulator of DNA base excision during DNA repair by mediating the methylation of DNA polymerase beta (POLB), leading to the stimulation of its polymerase activity by enhancing DNA binding and processivity. Methylates HMGA1. Regulates alternative splicing events. Acts as a transcriptional coactivator of a number of steroid hormone receptors including ESR1, ESR2, PGR and NR3C1. Promotes fasting-induced transcriptional activation of the gluconeogenic program through methylation of the CRTC2 transcription coactivator. Methylates GPS2, protecting GPS2 from ubiquitination and degradation. Methylates SIRT7, inhibiting SIRT7 histone deacetylase activity and promoting mitochondria biogenesis. The polypeptide is Protein arginine N-methyltransferase 6 (PRMT6) (Bos taurus (Bovine)).